The following is an 887-amino-acid chain: 3-hydroxy-3-methylglutaryl-coenzyme A reductase (887 aa).

Residues methionine 1–histidine 9 lie on the Cytoplasmic side of the membrane. Residues glycine 10–glycine 39 traverse the membrane as a helical segment. Topologically, residues asparagine 40–aspartate 56 are lumenal. Residues valine 57 to phenylalanine 78 traverse the membrane as a helical segment. The 158-residue stretch at aspartate 61–leucine 218 folds into the SSD domain. The INSIG-binding motif motif lies at tyrosine 75–phenylalanine 78. Residues glutamine 79–lysine 89 lie on the Cytoplasmic side of the membrane. Lysine 89 participates in a covalent cross-link: Glycyl lysine isopeptide (Lys-Gly) (interchain with G-Cter in ubiquitin). The helical transmembrane segment at tyrosine 90 to leucine 114 threads the bilayer. At aspartate 115 to glutamate 123 the chain is on the lumenal side. Residues alanine 124–serine 149 form a helical membrane-spanning segment. Over glutamine 150–arginine 159 the chain is Cytoplasmic. The helical transmembrane segment at glycine 160–valine 187 threads the bilayer. Residues arginine 188–glutamate 191 are Lumenal-facing. A helical membrane pass occupies residues isoleucine 192–leucine 220. Residues glutamate 221 to lysine 248 lie on the Cytoplasmic side of the membrane. Residue lysine 248 forms a Glycyl lysine isopeptide (Lys-Gly) (interchain with G-Cter in ubiquitin) linkage. The helical transmembrane segment at proline 249 to alanine 275 threads the bilayer. At aspartate 276 to lysine 314 the chain is on the lumenal side. Asparagine 281 is a glycosylation site (N-linked (GlcNAc...) asparagine). The chain crosses the membrane as a helical span at residues methionine 315–phenylalanine 339. Residues glutamate 340–alanine 887 are Cytoplasmic-facing. Active-site charge relay system residues include glutamate 558, lysine 690, and aspartate 766. Histidine 865 (proton donor) is an active-site residue. Residue serine 871 is modified to Phosphoserine; by AMPK.

It belongs to the HMG-CoA reductase family. Homotetramer. Homodimer. Interacts (via its SSD) with INSIG1; the interaction, accelerated by sterols, leads to the recruitment of HMGCR to AMFR/gp78 for its ubiquitination by the sterol-mediated ERAD pathway. Interacts with UBIAD1. Undergoes sterol-mediated ubiquitination and ER-associated degradation (ERAD). Accumulation of sterols in the endoplasmic reticulum (ER) membrane, triggers binding of the reductase to the ER membrane protein INSIG1 or INSIG2. The INSIG1 binding leads to the recruitment of the ubiquitin ligase, AMFR/gp78, RNF139 or RNF145, initiating ubiquitination of the reductase. The ubiquitinated reductase is then extracted from the ER membrane and delivered to cytosolic 26S proteosomes by a mechanism probably mediated by the ATPase Valosin-containing protein VCP/p97. The INSIG2-binding leads to the recruitment of the ubiquitin ligase RNF139, initiating ubiquitination of the reductase. Lys-248 is the main site of ubiquitination. Ubiquitination is enhanced by the presence of a geranylgeranylated protein. Post-translationally, N-glycosylated. Deglycosylated by NGLY1 on release from the endoplasmic reticulum (ER) in a sterol-mediated manner. In terms of processing, phosphorylated. Phosphorylation at Ser-871 reduces the catalytic activity.

It localises to the endoplasmic reticulum membrane. The protein localises to the peroxisome membrane. It catalyses the reaction (R)-mevalonate + 2 NADP(+) + CoA = (3S)-3-hydroxy-3-methylglutaryl-CoA + 2 NADPH + 2 H(+). Its pathway is metabolic intermediate biosynthesis; (R)-mevalonate biosynthesis; (R)-mevalonate from acetyl-CoA: step 3/3. Regulated by a negative feedback mechanism through sterols and non-sterol metabolites derived from mevalonate. Phosphorylation at Ser-871 down-regulates the catalytic activity. In terms of biological role, catalyzes the conversion of (3S)-hydroxy-3-methylglutaryl-CoA (HMG-CoA) to mevalonic acid, the rate-limiting step in the synthesis of cholesterol and other isoprenoids, thus plays a critical role in cellular cholesterol homeostasis. The chain is 3-hydroxy-3-methylglutaryl-coenzyme A reductase (HMGCR) from Mesocricetus auratus (Golden hamster).